A 93-amino-acid polypeptide reads, in one-letter code: Putative membrane protein insertion efficiency factor (93 aa).

Positions V72–E93 are disordered. The span at P82–E93 shows a compositional bias: basic residues.

It belongs to the UPF0161 family.

The protein localises to the cell membrane. In terms of biological role, could be involved in insertion of integral membrane proteins into the membrane. In Deinococcus geothermalis (strain DSM 11300 / CIP 105573 / AG-3a), this protein is Putative membrane protein insertion efficiency factor.